The sequence spans 325 residues: tRNA(Ile)-lysidine synthase (325 aa).

Position 35–40 (35–40 (SGGQDS)) interacts with ATP.

It belongs to the tRNA(Ile)-lysidine synthase family.

It is found in the cytoplasm. It carries out the reaction cytidine(34) in tRNA(Ile2) + L-lysine + ATP = lysidine(34) in tRNA(Ile2) + AMP + diphosphate + H(+). Functionally, ligates lysine onto the cytidine present at position 34 of the AUA codon-specific tRNA(Ile) that contains the anticodon CAU, in an ATP-dependent manner. Cytidine is converted to lysidine, thus changing the amino acid specificity of the tRNA from methionine to isoleucine. This Gloeobacter violaceus (strain ATCC 29082 / PCC 7421) protein is tRNA(Ile)-lysidine synthase.